The sequence spans 227 residues: MKFIILLFALIHITVAANRALIIDYSYYGCNLDCYIASNQENTCGAHDDDVSDQQYHACLCMNYDYFTNLMNCNCFDSNVYYVSSSICSMATASSEFETYDGAPSTMDVSTTDYSSSTEDISFTEDVSFTEDDSFTEYSSFTKYSSFTKYSSSVSSFTKVIWSTLETSSIKGIAATTSSYFTNAQTTSGTANDSSISKPSGSQIFVLCVISVVGFIFFFLFFLSLFV.

An N-terminal signal peptide occupies residues 1-16; the sequence is MKFIILLFALIHITVA. Asn-192 carries an N-linked (GlcNAc...) asparagine glycan. Residue Ser-200 is the site of GPI-anchor amidated serine attachment. Residues 201 to 227 constitute a propeptide, removed in mature form; sequence GSQIFVLCVISVVGFIFFFLFFLSLFV.

Belongs to the IHD1 family. In terms of processing, the GPI-anchor is attached to the protein in the endoplasmic reticulum and serves to target the protein to the cell surface. There, the glucosamine-inositol phospholipid moiety is cleaved off and the GPI-modified mannoprotein is covalently attached via its lipidless GPI glycan remnant to the 1,6-beta-glucan of the outer cell wall layer.

Its subcellular location is the secreted. It is found in the cell wall. The protein localises to the membrane. Probable GPI-anchored cell wall protein that may be involved in cell wall organization, hyphal growth, as well as in virulence. This Candida albicans (strain SC5314 / ATCC MYA-2876) (Yeast) protein is Probable cell wall protein PGA42 (PGA42).